Reading from the N-terminus, the 188-residue chain is Large ribosomal subunit protein uL10 (188 aa).

This sequence belongs to the universal ribosomal protein uL10 family. In terms of assembly, part of the ribosomal stalk of the 50S ribosomal subunit. The N-terminus interacts with L11 and the large rRNA to form the base of the stalk. The C-terminus forms an elongated spine to which L12 dimers bind in a sequential fashion forming a multimeric L10(L12)X complex.

In terms of biological role, forms part of the ribosomal stalk, playing a central role in the interaction of the ribosome with GTP-bound translation factors. This chain is Large ribosomal subunit protein uL10, found in Crocosphaera subtropica (strain ATCC 51142 / BH68) (Cyanothece sp. (strain ATCC 51142)).